The following is a 566-amino-acid chain: Urease subunit alpha (566 aa).

The Urease domain occupies glycine 129–phenylalanine 566. Ni(2+) is bound by residues histidine 134, histidine 136, and lysine 217. The residue at position 217 (lysine 217) is an N6-carboxylysine. Histidine 219 serves as a coordination point for substrate. Residues histidine 246 and histidine 272 each contribute to the Ni(2+) site. Catalysis depends on histidine 320, which acts as the Proton donor. Ni(2+) is bound at residue aspartate 360.

The protein belongs to the metallo-dependent hydrolases superfamily. Urease alpha subunit family. As to quaternary structure, heterotrimer of UreA (gamma), UreB (beta) and UreC (alpha) subunits. Three heterotrimers associate to form the active enzyme. The cofactor is Ni cation. Post-translationally, carboxylation allows a single lysine to coordinate two nickel ions.

The protein resides in the cytoplasm. It catalyses the reaction urea + 2 H2O + H(+) = hydrogencarbonate + 2 NH4(+). Its pathway is nitrogen metabolism; urea degradation; CO(2) and NH(3) from urea (urease route): step 1/1. The sequence is that of Urease subunit alpha from Janthinobacterium sp. (strain Marseille) (Minibacterium massiliensis).